The primary structure comprises 228 residues: uncharacterized protein (228 aa).

The next 5 membrane-spanning stretches (helical) occupy residues 14–34, 42–62, 130–150, 156–176, and 192–212; these read HTIS…MLLV, VALF…AITL, FIFS…LVGS, FSFD…VLFM, and IVIA…LIAL.

It belongs to the AzlC family.

The protein resides in the cell membrane. This is an uncharacterized protein from Helicobacter pylori (strain ATCC 700392 / 26695) (Campylobacter pylori).